A 220-amino-acid chain; its full sequence is GILT-like protein CBG03282 (220 aa).

A signal peptide spans 1-22 (MTIIRTLFVYYSFLFILVLCSS). An N-linked (GlcNAc...) asparagine glycan is attached at N131.

The protein belongs to the GILT family.

Its subcellular location is the secreted. The chain is GILT-like protein CBG03282 from Caenorhabditis briggsae.